Consider the following 188-residue polypeptide: Probable chorismate pyruvate-lyase (188 aa).

The substrate site is built by arginine 90, leucine 128, and glutamate 175.

It belongs to the UbiC family.

Its subcellular location is the cytoplasm. It carries out the reaction chorismate = 4-hydroxybenzoate + pyruvate. It functions in the pathway cofactor biosynthesis; ubiquinone biosynthesis. In terms of biological role, removes the pyruvyl group from chorismate, with concomitant aromatization of the ring, to provide 4-hydroxybenzoate (4HB) for the ubiquinone pathway. The polypeptide is Probable chorismate pyruvate-lyase (Marinobacter nauticus (strain ATCC 700491 / DSM 11845 / VT8) (Marinobacter aquaeolei)).